We begin with the raw amino-acid sequence, 422 residues long: MGSRETPSSCSKTHETLNLETPESSSTDPDSPLEEQWPKSAPDLKEEDSMDMVLEDSKEPLTPSSPPTGREVIRYEVNVNQRNIEDICLCCGSLQVYAQHPLFEGGICAPCKDKFLETLFLYDEDGHQSYCTICCSGHTLFICESPDCTRCYCFECVDILVGPGTSERINAMACWVCFLCLPFSRSGLLQRRKKWRHQLKAFHDREGASPVEIYKTVSAWKRQPVRVLSLFGNIDKELKSLGFLESSSGSEGGTLKYVEDVTNVVRREVEKWGPFDLVYGSTQPLGYSCDRCPGWYMFQFHRILQYARPRQDSQQPFFWIFVDNLLLTEDDQETTVRFLQTEAVTLQDVRGRVLQNAMRVWSNIPGLKSKHADLTPKEEQSLQTQVRTRSKLAAQKVDSLVKYCLLPLREYFKYFSQNSLPL.

A compositionally biased stretch (polar residues) spans 1-11; the sequence is MGSRETPSSCS. The segment at 1–50 is disordered; the sequence is MGSRETPSSCSKTHETLNLETPESSSTDPDSPLEEQWPKSAPDLKEEDSM. Positions 20 to 30 are enriched in low complexity; sequence ETPESSSTDPD. The region spanning 76 to 208 is the ADD domain; sequence EVNVNQRNIE…LKAFHDREGA (133 aa). Residues 87-117 form a GATA-type; atypical zinc finger; it reads ICLCCGSLQVYAQHPLFEGGICAPCKDKFLE. The PHD-type; atypical zinc-finger motif lies at 128 to 184; it reads QSYCTICCSGHTLFICESPDCTRCYCFECVDILVGPGTSERINAMACWVCFLCLPFS.

As to quaternary structure, homodimer. Heterotetramer composed of 1 DNMT3A homodimer and 2 DNMT3L subunits (DNMT3L-DNMT3A-DNMT3A-DNMT3L). Interacts with histone H3 (via N-terminus); interaction is strongly inhibited by methylation at lysine 4 (H3K4me). Interacts with EZH2; the interaction is direct. Interacts with SPOCD1.

Its subcellular location is the nucleus. Functionally, catalytically inactive regulatory factor of DNA methyltransferases that can either promote or inhibit DNA methylation depending on the context. Essential for the function of DNMT3A and DNMT3B: activates DNMT3A and DNMT3B by binding to their catalytic domain. Acts by accelerating the binding of DNA and S-adenosyl-L-methionine (AdoMet) to the methyltransferases and dissociates from the complex after DNA binding to the methyltransferases. Recognizes unmethylated histone H3 lysine 4 (H3K4me0) and induces de novo DNA methylation by recruitment or activation of DNMT3. Plays a key role in embryonic stem cells and germ cells. In germ cells, required for the methylation of imprinted loci together with DNMT3A. In male germ cells, specifically required to methylate retrotransposons, preventing their mobilization. Plays a key role in embryonic stem cells (ESCs) by acting both as an positive and negative regulator of DNA methylation. While it promotes DNA methylation of housekeeping genes together with DNMT3A and DNMT3B, it also acts as an inhibitor of DNA methylation at the promoter of bivalent genes. Interacts with the EZH2 component of the PRC2/EED-EZH2 complex, preventing interaction of DNMT3A and DNMT3B with the PRC2/EED-EZH2 complex, leading to maintain low methylation levels at the promoters of bivalent genes. Promotes differentiation of ESCs into primordial germ cells by inhibiting DNA methylation at the promoter of RHOX5, thereby activating its expression. This Rattus norvegicus (Rat) protein is DNA (cytosine-5)-methyltransferase 3-like (Dnmt3l).